Reading from the N-terminus, the 230-residue chain is Ribosomal RNA small subunit methyltransferase I (230 aa).

The protein belongs to the methyltransferase superfamily. RsmI family.

The protein resides in the cytoplasm. The catalysed reaction is cytidine(1402) in 16S rRNA + S-adenosyl-L-methionine = 2'-O-methylcytidine(1402) in 16S rRNA + S-adenosyl-L-homocysteine + H(+). Its function is as follows. Catalyzes the 2'-O-methylation of the ribose of cytidine 1402 (C1402) in 16S rRNA. This is Ribosomal RNA small subunit methyltransferase I from Hydrogenobaculum sp. (strain Y04AAS1).